The primary structure comprises 144 residues: Large ribosomal subunit protein uL13 (144 aa).

The protein belongs to the universal ribosomal protein uL13 family. Part of the 50S ribosomal subunit.

This protein is one of the early assembly proteins of the 50S ribosomal subunit, although it is not seen to bind rRNA by itself. It is important during the early stages of 50S assembly. This Ruminiclostridium cellulolyticum (strain ATCC 35319 / DSM 5812 / JCM 6584 / H10) (Clostridium cellulolyticum) protein is Large ribosomal subunit protein uL13.